The primary structure comprises 188 residues: Putative pre-16S rRNA nuclease (188 aa).

The disordered stretch occupies residues 144 to 188 (HAPGRVVAGPKGRRKARHRGQGGTGTEQQADAGGRARPHATEGKG). Residues 154–163 (KGRRKARHRG) show a composition bias toward basic residues.

It belongs to the YqgF nuclease family.

The protein resides in the cytoplasm. Functionally, could be a nuclease involved in processing of the 5'-end of pre-16S rRNA. The protein is Putative pre-16S rRNA nuclease of Kineococcus radiotolerans (strain ATCC BAA-149 / DSM 14245 / SRS30216).